The chain runs to 1324 residues: MSDKGIFRTSSTPSIVDVTPDRGERPRKLVRSVLESPSQKDVASIVKIEQTPSRPFFNDFLKKRITDSLNERPNLLNKFMSAQDGTPSKSTGFNERSSQLVSEFTTTEDIENCEETTQVLPPRLVVYELRLTNFKSYAGTQIVGPFHPSFSSIVGPNGSGKSNVIDALLFVFGFRASKLRQSKASALIHKSATHPSLDSCDVEITFKEVNSDFTYVDGSELTVRRTAYKNNTSKYFVNGVESSFSAVSNLLKEKGIDLNHKRFLILQGEVESIAQMKPRAISEGDDGLLEYLEDIIGTSKYKPIIEENMQELSNSDDICAEKESRLKLVLSEKAKLEDSKNSVLSFLKDENELFMKQNQLYRTILYETRNKKTLVQNLLNSLEGKLQAHLEKFEQTERDISEKNEEVKSLREKAAKVKNDCTSEKKTRQSYEQQTVKIEEQLKFLLNKEKKLKKSIEALSFEKSEAENSLSSHDIDSQKLNSEIADLSLRLQQEELSLDDIRKSLQGKTEGISNAIEEKQKAMAPALEKINQLTSEKQILQVELDMLLNKENDLINDVESSQSSLDKLRNDAEENRNILSSKLKVLSDLKGEKKDVSKNIERKKETVHNTYRNLMSNRTKLEEMKASLSSSRSRGNVLESLQRLHESDNLNGFFGRLGDLATIDEAYDVAISTACPALNHIVVDNIETGQKCVAFLRSNNLGRASFIILKELAQKNLARIQTPENVPRLFDLLRFNDQKFAPAFYNVLQNTLVAKNLEQANRIAYGKTRWRVVTLSGQLIDKSGTMTGGGTRVKKGGMSSAITSDVSPASVETCDKQVQLEDTRYRQHLSELESLNQRFTEISERIPSAELEISKLQLDVSACDRLVAGEERRILQLKSDLKSIRNNNERKRNLQNKISNMDKEVEAININNEGLVTEIKTLQDKIMEIGGIRYRIQKSKVDDLHEQLKFVKDKLNKMSFKKKKNEQRSQSFQVELSNLTSEYDTTTESIATLKTELQSLNKYVDEHKSRLREFENALWDINSSIDELVKFIEFESKQMNSVKAERIELENQIQEQRTALSEVGNNENKYLKLMSNLKLHNLTEFCDQTTMDSTFPEYSEDELSSVDKSELVSNISVLKKKTEDREVDINVLSEYRRCNKEAEKRDSDYQSELQKRTDLKKVVTDLQSQRLDEFMYGFGIISMKLKEMYQIITMGGNAELELVDSLDPFSEGVLFSVMPPKKSWKNISNLSGGEKTLSSLALVFALHNYKPTPLYVMDEIDAALDFKNVSIVANYIKERTKNAQFIVISLRSNMFELSSRLVGIYKTANMTKSVTINNKEILTD.

A disordered region spans residues 1–24 (MSDKGIFRTSSTPSIVDVTPDRGE). Thr19 is modified (phosphothreonine; by CDC2). 155–162 (GPNGSGKS) serves as a coordination point for ATP. Coiled-coil stretches lie at residues 310 to 337 (QELS…AKLE) and 370 to 628 (NKKT…KASL). The SMC hinge domain maps to 651-764 (NGFFGRLGDL…KNLEQANRIA (114 aa)). 2 coiled-coil regions span residues 825–1077 (YRQH…MSNL) and 1297–1324 (LSSR…ILTD).

It belongs to the SMC family. SMC4 subfamily. In terms of assembly, forms a heterodimer with cut14/smc2. Component of the condensin complex, which contains the smc2 and smc4 heterodimer, and three non smc subunits that probably regulate the complex: cnd1, cnd2 and cnd3. Interacts with C1739.07. In terms of processing, phosphorylated by CDC2 on Thr-19 at metaphase.

It is found in the nucleus. The protein localises to the cytoplasm. It localises to the chromosome. Central component of the condensin complex, a complex required for conversion of interphase chromatin into mitotic-like condense chromosomes. The condensin complex probably introduces positive supercoils into relaxed DNA in the presence of type I topoisomerases and converts nicked DNA into positive knotted forms in the presence of type II topoisomerases. This is Structural maintenance of chromosomes protein 4 (cut3) from Schizosaccharomyces pombe (strain 972 / ATCC 24843) (Fission yeast).